We begin with the raw amino-acid sequence, 551 residues long: Probable terpene synthase 8 (551 aa).

Residues aspartate 307, aspartate 311, and glutamate 457 each coordinate Mg(2+). The DDXXD motif motif lies at 307 to 311; the sequence is DDTYD.

Belongs to the terpene synthase family. It depends on Mg(2+) as a cofactor.

Probable sesquiterpene synthase. This is Probable terpene synthase 8 (TPS8) from Ricinus communis (Castor bean).